A 184-amino-acid chain; its full sequence is Chaperone protein YcdY (184 aa).

Belongs to the TorD/DmsD family. As to quaternary structure, interacts with YcdX.

Its function is as follows. Acts as a chaperone that increases YcdX activity, maybe by facilitating the correct insertion of the zinc ions into the catalytic site of YcdX. Involved in the swarming motility process. The chain is Chaperone protein YcdY (ycdY) from Escherichia coli (strain K12).